We begin with the raw amino-acid sequence, 239 residues long: Tumor protein p53-inducible nuclear protein 1 (239 aa).

The short motif at 25-37 (EKEDDEWILVDFI) is the LIR element.

As to quaternary structure, interacts with p53/TP53 and HIPK2. Interacts with PRKCG, GABARAP, GABARAPL1, GABARAPL2, MAP1LC3A, MAP1LC3B and MAP1LC3C. In terms of tissue distribution, specifically expressed by acinar cells of chronic pancreatitis tissue.

The protein localises to the cytoplasm. The protein resides in the cytosol. It is found in the nucleus. Its subcellular location is the PML body. It localises to the cytoplasmic vesicle. The protein localises to the autophagosome. Its function is as follows. Antiproliferative and proapoptotic protein involved in cell stress response which acts as a dual regulator of transcription and autophagy. Acts as a positive regulator of autophagy. In response to cellular stress or activation of autophagy, relocates to autophagosomes where it interacts with autophagosome-associated proteins GABARAP, GABARAPL1/L2, MAP1LC3A/B/C and regulates autophagy. Acts as an antioxidant and plays a major role in p53/TP53-driven oxidative stress response. Possesses both a p53/TP53-independent intracellular reactive oxygen species (ROS) regulatory function and a p53/TP53-dependent transcription regulatory function. Positively regulates p53/TP53 and p73/TP73 and stimulates their capacity to induce apoptosis and regulate cell cycle. In response to double-strand DNA breaks, promotes p53/TP53 phosphorylation on 'Ser-46' and subsequent apoptosis. Acts as a tumor suppressor by inducing cell death by an autophagy and caspase-dependent mechanism. Can reduce cell migration by regulating the expression of SPARC. This Rattus norvegicus (Rat) protein is Tumor protein p53-inducible nuclear protein 1 (Trp53inp1).